A 500-amino-acid polypeptide reads, in one-letter code: MPDAVKVGFVPFSAAARGTLVVFCDDTLKFGSVTGKALGAAASTVKRAVAASQFKGKSGSALDLLAPEGLKVGRLIVIGTGKAAALKDNDIVKLGGAVAGKLSTGDSAVTVIAELPGGAMRPEQAAAVASGIRLRAYKFDRYKTKKKDDDADAANANVSIAVADVAAAKKAFAPDSHVVDGVILARELVNEPPNVLYPEEFAKRAAQLRKLGVQVEILDVKAMTRLKMGALLGVSQGSAHPGRTVIMRWNGGKRGAQPVAFVGKGVCFDTGGISIKPSASMEDMKGDMGGAACVVGLMHALAARKAKINVIGAIGLVENMPDGNAQRPGDIVTSMSGQTIEIINTDAEGRLVLADVLWYVAQKHKPKFMVDLATLTGAIMVALGTDHAGLFSNNDELAERLTAAGLSTGERVWRMPLGPEYDKQIDSQFADMKNTGSRNGGSITAAQFLQRFVDNTPWAHLDIAGTAMGAPKSDINHSWGSGYGVRLLNALVAEHYEAKK.

Mn(2+)-binding residues include Lys264 and Asp269. Residue Lys276 is part of the active site. Positions 287, 346, and 348 each coordinate Mn(2+). Residue Arg350 is part of the active site.

This sequence belongs to the peptidase M17 family. Mn(2+) serves as cofactor.

The protein resides in the cytoplasm. It carries out the reaction Release of an N-terminal amino acid, Xaa-|-Yaa-, in which Xaa is preferably Leu, but may be other amino acids including Pro although not Arg or Lys, and Yaa may be Pro. Amino acid amides and methyl esters are also readily hydrolyzed, but rates on arylamides are exceedingly low.. The catalysed reaction is Release of an N-terminal amino acid, preferentially leucine, but not glutamic or aspartic acids.. Its function is as follows. Presumably involved in the processing and regular turnover of intracellular proteins. Catalyzes the removal of unsubstituted N-terminal amino acids from various peptides. This chain is Probable cytosol aminopeptidase, found in Rhodopseudomonas palustris (strain BisB5).